Here is a 478-residue protein sequence, read N- to C-terminus: JmjC domain-containing histone demethylation protein 1 (478 aa).

A PHD-type zinc finger spans residues 5–68; that stretch reads SESCPLCKVH…IYHCPECVPK (64 aa). The JmjC domain maps to 217 to 383; sequence SDVAKLGVDF…MQLKINEIER (167 aa). Substrate is bound at residue Thr-266. 2 residues coordinate Fe cation: His-269 and Asp-271. Position 286 (Lys-286) interacts with substrate. A Fe cation-binding site is contributed by His-351.

Belongs to the JHDM1 histone demethylase family. Fe(2+) serves as cofactor.

The protein resides in the nucleus. The enzyme catalyses N(6),N(6)-dimethyl-L-lysyl(36)-[histone H3] + 2 2-oxoglutarate + 2 O2 = L-lysyl(36)-[histone H3] + 2 formaldehyde + 2 succinate + 2 CO2. In terms of biological role, histone demethylase that specifically demethylates 'Lys-36' of histone H3, thereby playing a central role in histone code. The polypeptide is JmjC domain-containing histone demethylation protein 1 (JHD1) (Candida albicans (strain SC5314 / ATCC MYA-2876) (Yeast)).